We begin with the raw amino-acid sequence, 515 residues long: 2-isopropylmalate synthase (515 aa).

The 264-residue stretch at 5-268 folds into the Pyruvate carboxyltransferase domain; the sequence is LIIFDTTLRD…DLGIDTTQIV (264 aa). Positions 14, 202, 204, and 239 each coordinate Mn(2+). The interval 396-515 is regulatory domain; the sequence is KFVSLAQRSE…NADKLNPQRA (120 aa).

Belongs to the alpha-IPM synthase/homocitrate synthase family. LeuA type 1 subfamily. In terms of assembly, homodimer. The cofactor is Mn(2+).

Its subcellular location is the cytoplasm. The enzyme catalyses 3-methyl-2-oxobutanoate + acetyl-CoA + H2O = (2S)-2-isopropylmalate + CoA + H(+). It functions in the pathway amino-acid biosynthesis; L-leucine biosynthesis; L-leucine from 3-methyl-2-oxobutanoate: step 1/4. Functionally, catalyzes the condensation of the acetyl group of acetyl-CoA with 3-methyl-2-oxobutanoate (2-ketoisovalerate) to form 3-carboxy-3-hydroxy-4-methylpentanoate (2-isopropylmalate). The sequence is that of 2-isopropylmalate synthase from Burkholderia pseudomallei (strain 1106a).